Here is a 314-residue protein sequence, read N- to C-terminus: 4-hydroxy-3-methylbut-2-enyl diphosphate reductase (314 aa).

Residue Cys12 coordinates [4Fe-4S] cluster. The (2E)-4-hydroxy-3-methylbut-2-enyl diphosphate site is built by His41 and His74. 2 residues coordinate dimethylallyl diphosphate: His41 and His74. The isopentenyl diphosphate site is built by His41 and His74. Cys96 contributes to the [4Fe-4S] cluster binding site. His124 contacts (2E)-4-hydroxy-3-methylbut-2-enyl diphosphate. Position 124 (His124) interacts with dimethylallyl diphosphate. His124 serves as a coordination point for isopentenyl diphosphate. Glu126 acts as the Proton donor in catalysis. A (2E)-4-hydroxy-3-methylbut-2-enyl diphosphate-binding site is contributed by Thr167. [4Fe-4S] cluster is bound at residue Cys197. Positions 225, 226, 227, and 269 each coordinate (2E)-4-hydroxy-3-methylbut-2-enyl diphosphate. Dimethylallyl diphosphate contacts are provided by Ser225, Ser226, Asn227, and Ser269. Isopentenyl diphosphate-binding residues include Ser225, Ser226, Asn227, and Ser269.

Belongs to the IspH family. It depends on [4Fe-4S] cluster as a cofactor.

The enzyme catalyses isopentenyl diphosphate + 2 oxidized [2Fe-2S]-[ferredoxin] + H2O = (2E)-4-hydroxy-3-methylbut-2-enyl diphosphate + 2 reduced [2Fe-2S]-[ferredoxin] + 2 H(+). It catalyses the reaction dimethylallyl diphosphate + 2 oxidized [2Fe-2S]-[ferredoxin] + H2O = (2E)-4-hydroxy-3-methylbut-2-enyl diphosphate + 2 reduced [2Fe-2S]-[ferredoxin] + 2 H(+). The protein operates within isoprenoid biosynthesis; dimethylallyl diphosphate biosynthesis; dimethylallyl diphosphate from (2E)-4-hydroxy-3-methylbutenyl diphosphate: step 1/1. Its pathway is isoprenoid biosynthesis; isopentenyl diphosphate biosynthesis via DXP pathway; isopentenyl diphosphate from 1-deoxy-D-xylulose 5-phosphate: step 6/6. Functionally, catalyzes the conversion of 1-hydroxy-2-methyl-2-(E)-butenyl 4-diphosphate (HMBPP) into a mixture of isopentenyl diphosphate (IPP) and dimethylallyl diphosphate (DMAPP). Acts in the terminal step of the DOXP/MEP pathway for isoprenoid precursor biosynthesis. The sequence is that of 4-hydroxy-3-methylbut-2-enyl diphosphate reductase from Pseudoalteromonas atlantica (strain T6c / ATCC BAA-1087).